Reading from the N-terminus, the 113-residue chain is Large ribosomal subunit protein uL22 (113 aa).

It belongs to the universal ribosomal protein uL22 family. Part of the 50S ribosomal subunit.

In terms of biological role, this protein binds specifically to 23S rRNA; its binding is stimulated by other ribosomal proteins, e.g. L4, L17, and L20. It is important during the early stages of 50S assembly. It makes multiple contacts with different domains of the 23S rRNA in the assembled 50S subunit and ribosome. Its function is as follows. The globular domain of the protein is located near the polypeptide exit tunnel on the outside of the subunit, while an extended beta-hairpin is found that lines the wall of the exit tunnel in the center of the 70S ribosome. This is Large ribosomal subunit protein uL22 from Bacillus subtilis (strain 168).